The chain runs to 558 residues: Cytochrome P450 monooxygenase sdnT (558 aa).

Residues 21 to 41 (IISLTTCFVCAFAVSFVALAI) form a helical membrane-spanning segment. Residues 298–317 (QNAGSNTRPKPPKRKQDTQP) are disordered. 2 N-linked (GlcNAc...) asparagine glycosylation sites follow: Asn-464 and Asn-495. Cys-505 is a binding site for heme.

It belongs to the cytochrome P450 family. Heme is required as a cofactor.

The protein localises to the membrane. The protein operates within antibiotic biosynthesis. Functionally, cytochrome P450 monooxygenase; part of the gene cluster that mediates the biosynthesis of sordarin and hypoxysordarin, glycoside antibiotics with a unique tetracyclic diterpene aglycone structure. First, the geranylgeranyl diphosphate synthase sdnC constructs GGDP from farnesyl diphosphate and isopentenyl diphosphate. The diterpene cyclase sdnA then catalyzes the cyclization of GGDP to afford cycloaraneosene. Cycloaraneosene is then hydroxylated four times by the putative cytochrome P450 monooxygenases sdnB, sdnE, sdnF and sdnH to give a hydroxylated cycloaraneosene derivative such as cycloaraneosene-8,9,13,19-tetraol. Although the order of the hydroxylations is unclear, at least C8, C9 and C13 of the cycloaraneosene skeleton are hydroxylated before the sordaricin formation. Dehydration of the 13-hydroxy group of the hydroxylated cycloaraneosene derivative might be catalyzed by an unassigned hypothetical protein such as sdnG and sdnP to construct the cyclopentadiene moiety. The FAD-dependent oxidoreductase sdnN is proposed to catalyze the oxidation at C9 of the hydroxylated cycloaraneosene derivative and also catalyze the Baeyer-Villiger oxidation to give the lactone intermediate. The presumed lactone intermediate would be hydrolyzed to give an acrolein moiety and a carboxylate moiety. Then, [4+2]cycloaddition would occur between the acrolein moiety and the cyclopentadiene moiety to give sordaricin. SdnN might also be involved in the [4+2]cycloaddition after the hypothesized oxidation to accommodate the oxidized product and prompt the [4+2]cycloaddition. GDP-6-deoxy-D-altrose may be biosynthesized from GDP-D-mannose by the putative GDP-mannose-4,6-dehydratase sdnI and the short-chain dehydrogenase sdnK. The glycosyltransferase sdnJ catalyzes the attachment of 6-deoxy-D-altrose onto the 19-hydroxy group of sordaricin to give 4'-O-demethylsordarin. The methyltransferase sdnD would complete the biosynthesis of sordarin. Sordarin can be further modified into hypoxysordarin. The unique acyl chain at the 3'-hydroxy group of hypoxysordarin would be constructed by an iterative type I PKS sdnO and the trans-acting polyketide methyltransferase sdnL. SdnL would be responsible for the introduction of an alpha-methyl group of the polyketide chain. Alternatively, the beta-lactamase-like protein sdnR might be responsible for the cleavage and transfer of the polyketide chain from the PKS sdnO to sordarin. Two putative cytochrome P450 monooxygenases, sdnQ and sdnT, might catalyze the epoxidations of the polyketide chain to complete the biosynthesis of hypoxysordarin. Transcriptional regulators sdnM and sdnS are presumably encoded for the transcriptional regulation of the expression of the sdn gene cluster. The polypeptide is Cytochrome P450 monooxygenase sdnT (Sordaria araneosa (Pleurage araneosa)).